The sequence spans 185 residues: Large ribosomal subunit protein bL12c (185 aa).

The N-terminal 47 residues, 1-47 (MASTALSSAFSLLSLPSSSSPAAAAAAAPRSFAVPSRARPRRAVAVV), are a transit peptide targeting the chloroplast.

It belongs to the bacterial ribosomal protein bL12 family.

The protein resides in the plastid. Its subcellular location is the chloroplast. The polypeptide is Large ribosomal subunit protein bL12c (RPL12-2) (Oryza sativa subsp. japonica (Rice)).